A 169-amino-acid polypeptide reads, in one-letter code: N-alpha-acetyltransferase 50 (169 aa).

In terms of domain architecture, N-acetyltransferase spans 6 to 155 (IELGDVTPHN…DAHVLQKNLK (150 aa)). At threonine 12 the chain carries Phosphothreonine. Tyrosine 31 is a binding site for substrate. Residues lysine 34 and lysine 37 each carry the N6-acetyllysine modification. Tyrosine 73 is an active-site residue. Methionine 75 contributes to the substrate binding site. Residue 77–90 (LGCLAPYRRLGIGT) coordinates acetyl-CoA. Position 110 is a phosphotyrosine (tyrosine 110). Residue histidine 112 is part of the active site. 117-126 (NESAIDFYRK) lines the CoA pocket. The interval 138-141 (YYKR) is substrate. Lysine 140 is subject to N6-acetyllysine.

Belongs to the acetyltransferase family. GNAT subfamily. As to quaternary structure, component of the N-terminal acetyltransferase E (NatE) complex at least composed of NAA10, NAA15 and NAA50. Interacts with NAA10. Interacts with NAA15. Predominantly interacts with NAA15 in the N-terminal acetyltransferase A complex (NatA complex); the interactions reduce the acetylation activity of the NatA complex. Component of the N-terminal acetyltransferase E (NatE)/HYPK complex at least composed of NAA10, NAA15, NAA50 and HYPK. Within the complex interacts with NAA15. Its capacity to interact with the NatA complex is reduced by HYPK. Interacts with NAA35.

It is found in the cytoplasm. It localises to the nucleus. It carries out the reaction N-terminal L-methionyl-L-alanyl-[protein] + acetyl-CoA = N-terminal N(alpha)-acetyl-L-methionyl-L-alanyl-[protein] + CoA + H(+). The catalysed reaction is N-terminal L-methionyl-L-seryl-[protein] + acetyl-CoA = N-terminal N(alpha)-acetyl-L-methionyl-L-seryl-[protein] + CoA + H(+). It catalyses the reaction N-terminal L-methionyl-L-valyl-[protein] + acetyl-CoA = N-terminal N(alpha)-acetyl-L-methionyl-L-valyl-[protein] + CoA + H(+). The enzyme catalyses N-terminal L-methionyl-L-threonyl-[protein] + acetyl-CoA = N-terminal N(alpha)-acetyl-L-methionyl-L-threonyl-[protein] + CoA + H(+). It carries out the reaction N-terminal L-methionyl-L-lysyl-[protein] + acetyl-CoA = N-terminal N(alpha)-acetyl-L-methionyl-L-lysyl-[protein] + CoA + H(+). The catalysed reaction is N-terminal L-methionyl-L-leucyl-[protein] + acetyl-CoA = N-terminal N(alpha)-acetyl-L-methionyl-L-leucyl-[protein] + CoA + H(+). It catalyses the reaction N-terminal L-methionyl-L-phenylalanyl-[protein] + acetyl-CoA = N-terminal N(alpha)-acetyl-L-methionyl-L-phenylalanyl-[protein] + CoA + H(+). The enzyme catalyses N-terminal L-methionyl-L-tyrosyl-[protein] + acetyl-CoA = N-terminal N(alpha)-acetyl-L-methionyl-L-tyrosyl-[protein] + CoA + H(+). N-alpha-acetyltransferase that acetylates the N-terminus of proteins that retain their initiating methionine. Has a broad substrate specificity: able to acetylate the initiator methionine of most peptides, except for those with a proline in second position. Also displays N-epsilon-acetyltransferase activity by mediating acetylation of the side chain of specific lysines on proteins. Autoacetylates in vivo. The relevance of N-epsilon-acetyltransferase activity is however unclear: able to acetylate H4 in vitro, but this result has not been confirmed in vivo. Component of N-alpha-acetyltransferase complexes containing NAA10 and NAA15, which has N-alpha-acetyltransferase activity. Does not influence the acetyltransferase activity of NAA10. However, it negatively regulates the N-alpha-acetyltransferase activity of the N-terminal acetyltransferase A complex (also called the NatA complex). The multiprotein complexes probably constitute the major contributor for N-terminal acetylation at the ribosome exit tunnel, with NAA10 acetylating all amino termini that are devoid of methionine and NAA50 acetylating other peptides. Required for sister chromatid cohesion during mitosis by promoting binding of CDCA5/sororin to cohesin: may act by counteracting the function of NAA10. The sequence is that of N-alpha-acetyltransferase 50 (NAA50) from Bos taurus (Bovine).